Here is a 265-residue protein sequence, read N- to C-terminus: Energy-coupling factor transporter transmembrane protein EcfT (265 aa).

The next 5 helical transmembrane spans lie at 32-52, 72-92, 115-135, 150-170, and 245-265; these read MVLL…VFII, LVII…GRVI, LIML…IALT, VPAH…PTLM, and LAAF…RFIW.

This sequence belongs to the energy-coupling factor EcfT family. Forms a stable energy-coupling factor (ECF) transporter complex composed of 2 membrane-embedded substrate-binding proteins (S component), 2 ATP-binding proteins (A component) and 2 transmembrane proteins (T component). May be able to interact with more than 1 S component at a time.

The protein localises to the cell membrane. Functionally, transmembrane (T) component of an energy-coupling factor (ECF) ABC-transporter complex. Unlike classic ABC transporters this ECF transporter provides the energy necessary to transport a number of different substrates. The chain is Energy-coupling factor transporter transmembrane protein EcfT from Thermosediminibacter oceani (strain ATCC BAA-1034 / DSM 16646 / JW/IW-1228P).